The following is a 293-amino-acid chain: Putative serine protease 42 (293 aa).

Residues 1 to 26 (MSSGGGSRGLLAWLLLLQPWPGQNWA) form the signal peptide. The segment at 33-60 (LPSPLLSEEGGENPEASPAPGPEAGPPL) is disordered. In terms of domain architecture, Peptidase S1 spans 80–293 (IVGGVDAEEG…IVSWGIGCGR (214 aa)). Cys105 and Cys121 are joined by a disulfide. His120 acts as the Charge relay system in catalysis. Residue Asn141 is glycosylated (N-linked (GlcNAc...) asparagine). Catalysis depends on Asp166, which acts as the Charge relay system. Asn177 is a glycosylation site (N-linked (GlcNAc...) asparagine). Cystine bridges form between Cys200-Cys273, Cys232-Cys253, and Cys263-Cys291. Ser267 functions as the Charge relay system in the catalytic mechanism. An N-linked (GlcNAc...) asparagine glycan is attached at Asn276.

This sequence belongs to the peptidase S1 family.

The protein localises to the cytoplasm. The protein resides in the cell membrane. Its function is as follows. Plays a role in spermatogenesis. Involved in germ cell survival during meiosis. This chain is Putative serine protease 42, found in Homo sapiens (Human).